The sequence spans 473 residues: Microtubule-binding protein TANGLED (473 aa).

Residues 1-132 (MVARTPQKQR…VTRDIVDAIA (132 aa)) form a required for binding to TAN and location to the cortical division sites (CDS) during cytokinesis region. Disordered regions lie at residues 131 to 218 (IAPK…ENSF) and 290 to 354 (ASKF…LSTA). Composition is skewed to polar residues over residues 205–216 (ISPQVKGNNGEN) and 307–329 (PTRNGSNSVRKSPRGSRSPTRTV).

In terms of assembly, interacts with POK1. Strongly expressed in flower buds and root tips.

The protein resides in the nucleus. Its subcellular location is the nucleolus. It is found in the cytoplasm. The protein localises to the cytoskeleton. It localises to the phragmoplast. In terms of biological role, is required for spatial control cell division during plant development. Through an association with microtubules, acts both for the positioning of cytoskeletal arrays that establish planes of cell division during prophase and for spatial guidance of expanding phragmoplasts toward preestablished cortical division sites (CDS) during cytokinesis. This chain is Microtubule-binding protein TANGLED (TAN), found in Arabidopsis thaliana (Mouse-ear cress).